The sequence spans 335 residues: Nucleoid-associated protein YejK (335 aa).

Belongs to the YejK family.

The protein resides in the cytoplasm. Its subcellular location is the nucleoid. This is Nucleoid-associated protein YejK from Shigella boydii serotype 18 (strain CDC 3083-94 / BS512).